The chain runs to 1185 residues: ELMO domain-containing protein F (1185 aa).

Disordered stretches follow at residues 88-133 (QPSP…GNNN), 176-196 (ISTN…NTAE), 361-409 (NNNS…VENE), 566-628 (KSTD…NTKS), 642-805 (ETER…KSSG), 819-868 (LGEK…PYII), 883-989 (DLDF…TQVT), and 1044-1114 (QKQK…KPVL). Composition is skewed to low complexity over residues 94 to 127 (STIH…SSPI), 176 to 194 (ISTN…NNNT), 361 to 406 (NNNS…NNNV), and 587 to 613 (PQSQ…SSSS). The ELMO domain occupies 275 to 488 (DRQNVLSFLN…KTRAVLSRIK (214 aa)). The segment covering 648 to 665 (SLTGSNGITDGGDSNPNS) has biased composition (polar residues). The segment covering 688–699 (SENGSSSSFSFE) has biased composition (low complexity). Over residues 721-732 (FNSLTGELTMNI) the composition is skewed to polar residues. Composition is skewed to low complexity over residues 733–760 (SSSS…PNVS) and 767–780 (TTTT…TTTT). The segment covering 781–790 (DDQSQQQVPP) has biased composition (polar residues). Positions 829–841 (KVKSKKEKKKKSK) are enriched in basic residues. 4 stretches are compositionally biased toward low complexity: residues 853 to 864 (NNSANNSSYNNS), 912 to 974 (SSSN…QQPQ), 1053 to 1072 (DENQ…SSNE), and 1096 to 1109 (GRNS…SSLS).

The protein is ELMO domain-containing protein F (elmoF) of Dictyostelium discoideum (Social amoeba).